We begin with the raw amino-acid sequence, 370 residues long: Platelet-derived growth factor D (370 aa).

The first 18 residues, 1–18 (MHRLIFVCTLVCANFCSC), serve as a signal peptide directing secretion. The CUB domain occupies 52 to 170 (RDETIQVRGN…PGFKIYYSLL (119 aa)). Cysteines 109 and 131 form a disulfide. Asn276 carries N-linked (GlcNAc...) asparagine glycosylation. Cystine bridges form between Cys302–Cys360 and Cys306–Cys362.

It belongs to the PDGF/VEGF growth factor family. Homodimer; disulfide-linked. Interacts with PDGFRB homodimers, and with heterodimers formed by PDGFRA and PDGFRB. Activated by proteolytic cleavage. Proteolytic removal of the N-terminal CUB domain releasing the core domain is necessary for unmasking the receptor-binding epitopes of the core domain. Cleavage after Arg-247 or Arg-249 by urokinase plasminogen activator gives rise to the active form.

The protein resides in the secreted. In terms of biological role, growth factor that plays an essential role in the regulation of embryonic development, cell proliferation, cell migration, survival and chemotaxis. Potent mitogen for cells of mesenchymal origin. Plays an important role in wound healing. Induces macrophage recruitment, increased interstitial pressure, and blood vessel maturation during angiogenesis. Can initiate events that lead to a mesangial proliferative glomerulonephritis, including influx of monocytes and macrophages and production of extracellular matrix. This is Platelet-derived growth factor D (PDGFD) from Pongo abelii (Sumatran orangutan).